We begin with the raw amino-acid sequence, 278 residues long: Bicarbonate transport ATP-binding protein CmpD (278 aa).

Residues 21–254 enclose the ABC transporter domain; sequence LIVENVSKIY…RPRDRERIME (234 aa). 57–64 is an ATP binding site; that stretch reads GHSGCGKS.

It belongs to the ABC transporter superfamily. Nitrate/nitrite/cyanate uptake transporter (NitT) (TC 3.A.1.16) family. As to quaternary structure, the complex is composed of two ATP-binding proteins (CmpC and CmpD), a transmembrane protein (CmpB) and a solute-binding protein (CmpA).

It localises to the cell inner membrane. In terms of biological role, part of the ABC transporter complex CmpABCD involved in bicarbonate transport. Responsible for energy coupling to the transport system. The protein is Bicarbonate transport ATP-binding protein CmpD (cmpD) of Synechococcus elongatus (strain ATCC 33912 / PCC 7942 / FACHB-805) (Anacystis nidulans R2).